Consider the following 92-residue polypeptide: Small ribosomal subunit protein uS19 (92 aa).

Belongs to the universal ribosomal protein uS19 family.

In terms of biological role, protein S19 forms a complex with S13 that binds strongly to the 16S ribosomal RNA. The chain is Small ribosomal subunit protein uS19 from Sodalis glossinidius (strain morsitans).